The following is a 422-amino-acid chain: Acylglycerol kinase, mitochondrial (422 aa).

An N6-acetyllysine modification is found at K6. Residues 15–31 are hydrophobic; that stretch reads TTAGLCLLTWGGHWLYG. Residues 58 to 199 form the DAGKc domain; the sequence is AQVKKATVFL…LDVLQIKGEK (142 aa). Positions 249–271 are disordered; it reads QASISYTGPTERPPSEPEETPVQ.

The protein belongs to the AGK family. Component of the TIM22 complex, which core is composed of TIMM22, associated with TIMM10 (TIMM10A and/or TIMM10B), TIMM9, AGK and TIMM29. Interacts with SMIM26. Mg(2+) is required as a cofactor.

The protein localises to the mitochondrion inner membrane. It is found in the mitochondrion intermembrane space. It carries out the reaction a monoacylglycerol + ATP = a monoacyl-sn-glycero-3-phosphate + ADP + H(+). The catalysed reaction is a 1,2-diacyl-sn-glycerol + ATP = a 1,2-diacyl-sn-glycero-3-phosphate + ADP + H(+). It catalyses the reaction an N-acylsphing-4-enine + ATP = an N-acylsphing-4-enine 1-phosphate + ADP + H(+). The enzyme catalyses 1-(9Z-octadecenoyl)-sn-glycerol + ATP = 1-(9Z-octadecenoyl)-sn-glycero-3-phosphate + ADP + H(+). It carries out the reaction 1,2-di-(9Z-octadecenoyl)-sn-glycerol + ATP = 1,2-di-(9Z-octadecenoyl)-sn-glycero-3-phosphate + ADP + H(+). The catalysed reaction is a 1-acyl-sn-glycerol + ATP = a 1-acyl-sn-glycero-3-phosphate + ADP + H(+). It catalyses the reaction 1-hexadecanoyl-sn-glycerol + ATP = 1-hexadecanoyl-sn-glycero-3-phosphate + ADP + H(+). The enzyme catalyses a 2-acylglycerol + ATP = a 2-acyl-sn-glycerol 3-phosphate + ADP + H(+). It carries out the reaction 2-(5Z,8Z,11Z,14Z-eicosatetraenoyl)-glycerol + ATP = 2-(5Z,8Z,11Z,14Z-eicosatetraenoyl)-sn-glycero-3-phosphate + ADP + H(+). The catalysed reaction is 1-(5Z,8Z,11Z,14Z-eicosatetraenoyl)-sn-glycerol + ATP = 1-(5Z,8Z,11Z,14Z-eicosatetraenoyl)-sn-glycero-3-phosphate + ADP + H(+). It catalyses the reaction N-(hexanoyl)sphing-4-enine + ATP = N-hexanoylsphing-4-enine 1-phosphate + ADP + H(+). Its pathway is lipid metabolism; glycerolipid metabolism. Functionally, lipid kinase that can phosphorylate both monoacylglycerol and diacylglycerol to form lysophosphatidic acid (LPA) and phosphatidic acid (PA), respectively. Phosphorylates ceramide but not sphingosine. Phosphorylates 1,2-dioleoylglycerol more rapidly than 2,3-dioleoylglycerol. Independently of its lipid kinase activity, acts as a component of the TIM22 complex. The TIM22 complex mediates the import and insertion of multi-pass transmembrane proteins into the mitochondrial inner membrane by forming a twin-pore translocase that uses the membrane potential as the external driving force. In the TIM22 complex, required for the import of a subset of metabolite carriers into mitochondria, such as ANT1/SLC25A4 and SLC25A24, while it is not required for the import of TIMM23. Overexpression increases the formation and secretion of LPA, resulting in transactivation of EGFR and activation of the downstream MAPK signaling pathway, leading to increased cell growth. The chain is Acylglycerol kinase, mitochondrial from Pongo abelii (Sumatran orangutan).